The primary structure comprises 273 residues: F-actin-capping protein subunit alpha (273 aa).

This sequence belongs to the F-actin-capping protein alpha subunit family. Heterodimer of an alpha and a beta subunit.

The protein resides in the cytoplasm. It localises to the cytoskeleton. Its function is as follows. F-actin-capping proteins bind in a Ca(2+)-independent manner to the fast growing ends of actin filaments (barbed end) thereby blocking the exchange of subunits at these ends. Unlike other capping proteins (such as gelsolin and severin), these proteins do not sever actin filaments. The sequence is that of F-actin-capping protein subunit alpha (CAP1) from Gibberella zeae (strain ATCC MYA-4620 / CBS 123657 / FGSC 9075 / NRRL 31084 / PH-1) (Wheat head blight fungus).